The chain runs to 327 residues: tRNA uridine(34) hydroxylase (327 aa).

The Rhodanese domain maps to 123–217 (SDPEVLVVDT…YLEEVPQEQS (95 aa)). Cys-177 acts as the Cysteine persulfide intermediate in catalysis.

This sequence belongs to the TrhO family.

The enzyme catalyses uridine(34) in tRNA + AH2 + O2 = 5-hydroxyuridine(34) in tRNA + A + H2O. Functionally, catalyzes oxygen-dependent 5-hydroxyuridine (ho5U) modification at position 34 in tRNAs. This Vibrio cholerae serotype O1 (strain ATCC 39315 / El Tor Inaba N16961) protein is tRNA uridine(34) hydroxylase.